A 513-amino-acid chain; its full sequence is Glycine/sarcosine/betaine reductase complex component C subunit beta (513 aa).

As to quaternary structure, heterooctamer of four alpha and four beta subunits. Component of the glycine, sarcosine and betaine reductase complexes, together with proteins A and B.

The enzyme catalyses acetyl phosphate + [thioredoxin]-disulfide + NH4(+) + H2O = [thioredoxin]-dithiol + glycine + phosphate + H(+). It carries out the reaction acetyl phosphate + methylamine + [thioredoxin]-disulfide + H2O = sarcosine + [thioredoxin]-dithiol + phosphate + H(+). It catalyses the reaction acetyl phosphate + trimethylamine + [thioredoxin]-disulfide + H2O = glycine betaine + [thioredoxin]-dithiol + phosphate + H(+). In the first step of glycine, betaine and sarcosine reductases, the substrate is bound to component PB via a Schiff base intermediate. Then the PB-activated substrate is nucleophilically attacked by the selenol anion of component PA to transform it to a carboxymethylated selenoether and the respective amine. By action of component PC, acetyl phosphate is formed, leaving component PA in its oxidized state. Finally component PA becomes reduced by the thioredoxin system to start a new catalytic cycle of reductive deamination. The protein is Glycine/sarcosine/betaine reductase complex component C subunit beta (grdC) of Peptoclostridium acidaminophilum (Eubacterium acidaminophilum).